Here is a 654-residue protein sequence, read N- to C-terminus: Potassium voltage-gated channel subfamily A member 4 (654 aa).

The Cytoplasmic portion of the chain corresponds to 1 to 305 (MEVAMVSAES…LLFEYPESSS (305 aa)). Residues 24-145 (QARARERERL…EEGRFYYSEE (122 aa)) are disordered. Residues 36-50 (SRAAAAAAVAAATAA) are compositionally biased toward low complexity. Residues 81 to 99 (GSRRRRRQRTEKKKLHHRQ) show a composition bias toward basic residues. S122 is modified (phosphoserine). Residues 122–137 (SEEEEDEEEEEEEEEE) show a composition bias toward acidic residues. The chain crosses the membrane as a helical span at residues 306–327 (PARGIAIVSVLVILISIVIFCL). Over 328–371 (ETLPEFRDDRDLIMALSAGGHSRLLNDTSAPHLENSGHTIFNDP) the chain is Extracellular. N-linked (GlcNAc...) asparagine glycosylation occurs at N353. Residues 372–393 (FFIVETVCIVWFSFEFVVRCFA) form a helical membrane-spanning segment. The Cytoplasmic segment spans residues 394–404 (CPSQALFFKNI). Residues 405–425 (MNIIDIVSILPYFITLGTDLA) form a helical membrane-spanning segment. At 426-440 (QQQGGGNGQQQQAMS) the chain is on the extracellular side. The helical; Voltage-sensor transmembrane segment at 441-461 (FAILRIIRLVRVFRIFKLSRH) threads the bilayer. The Cytoplasmic portion of the chain corresponds to 462–476 (SKGLQILGHTLRASM). Positions 463 to 476 (KGLQILGHTLRASM) are S4-S5 linker. Residues 477 to 498 (RELGLLIFFLFIGVILFSSAVY) form a helical membrane-spanning segment. Residues 499–512 (FAEADEPTTHFQSI) lie on the Extracellular side of the membrane. The segment at residues 513-524 (PDAFWWAVVTMT) is an intramembrane region (helical). Residues 525–530 (TVGYGD) carry the Selectivity filter motif. Residues 525 to 532 (TVGYGDMK) lie within the membrane without spanning it. Topologically, residues 533 to 539 (PITVGGK) are extracellular. The chain crosses the membrane as a helical span at residues 540–568 (IVGSLCAIAGVLTIALPVPVIVSNFNYFY). Residues 569 to 654 (HRETENEEQT…SNAKAVETDV (86 aa)) are Cytoplasmic-facing. S600 is subject to Phosphoserine; by PKA. The segment covering 630–641 (CQGKGDESETDK) has biased composition (basic and acidic residues). Positions 630–654 (CQGKGDESETDKNNCSNAKAVETDV) are disordered. The short motif at 652–654 (TDV) is the PDZ-binding element.

This sequence belongs to the potassium channel family. A (Shaker) (TC 1.A.1.2) subfamily. Kv1.4/KCNA4 sub-subfamily. In terms of assembly, homotetramer and heterotetramer of potassium channel proteins. Interacts with KCNAB1 and KCNAB2. Interacts with DLG1, DLG2 and DLG4 via their PDZ domains. Interacts with SIGMAR1. Detected in a complex with KCNA1. Interacts with KCNA2. Part of a complex containing KCNA1, KCNAB1 and LGI1. Interacts (via cytoplasmic N-terminal domain) with KCNRG. In terms of tissue distribution, expressed in the brain, lens and retina.

It is found in the cell membrane. Its subcellular location is the cell projection. The protein localises to the axon. The catalysed reaction is K(+)(in) = K(+)(out). Its function is as follows. Voltage-gated potassium channel that mediates transmembrane potassium transport in excitable membranes. Forms tetrameric potassium-selective channels through which potassium ions pass in accordance with their electrochemical gradient. The channel alternates between opened and closed conformations in response to the voltage difference across the membrane. Can form functional homotetrameric channels and heterotetrameric channels that contain variable proportions of KCNA1, KCNA2, KCNA4, KCNA5, and possibly other family members as well; channel properties depend on the type of alpha subunits that are part of the channel. Channel properties are modulated by cytoplasmic beta subunits that regulate the subcellular location of the alpha subunits and promote rapid inactivation. In vivo, membranes probably contain a mixture of heteromeric potassium channel complexes, making it difficult to assign currents observed in intact tissues to any particular potassium channel family member. Homotetrameric KCNA4 forms a potassium channel that opens in response to membrane depolarization, followed by rapid spontaneous channel closure. Likewise, a heterotetrameric channel formed by KCNA1 and KCNA4 shows rapid inactivation. In Mus musculus (Mouse), this protein is Potassium voltage-gated channel subfamily A member 4 (Kcna4).